The sequence spans 662 residues: UvrABC system protein B (662 aa).

A Helicase ATP-binding domain is found at 31–188 (DNIEGGEKAQ…NDLVDIQFER (158 aa)). 44-51 (GATGTGKT) is a binding site for ATP. Residues 97 to 120 (YYDYYQPEAYVPSSDTYIEKDSSV) carry the Beta-hairpin motif. The region spanning 435–601 (QIDDLLGEIN…TIKKEIRDLI (167 aa)) is the Helicase C-terminal domain. The region spanning 626–661 (KELVKKLEKQMQEAVEVLDFELAAQIRDMMLEVKAL) is the UVR domain.

Belongs to the UvrB family. Forms a heterotetramer with UvrA during the search for lesions. Interacts with UvrC in an incision complex.

Its subcellular location is the cytoplasm. Its function is as follows. The UvrABC repair system catalyzes the recognition and processing of DNA lesions. A damage recognition complex composed of 2 UvrA and 2 UvrB subunits scans DNA for abnormalities. Upon binding of the UvrA(2)B(2) complex to a putative damaged site, the DNA wraps around one UvrB monomer. DNA wrap is dependent on ATP binding by UvrB and probably causes local melting of the DNA helix, facilitating insertion of UvrB beta-hairpin between the DNA strands. Then UvrB probes one DNA strand for the presence of a lesion. If a lesion is found the UvrA subunits dissociate and the UvrB-DNA preincision complex is formed. This complex is subsequently bound by UvrC and the second UvrB is released. If no lesion is found, the DNA wraps around the other UvrB subunit that will check the other stand for damage. This is UvrABC system protein B from Streptococcus pneumoniae serotype 19F (strain G54).